The sequence spans 337 residues: Holliday junction branch migration complex subunit RuvB (337 aa).

The interval 1–181 is large ATPase domain (RuvB-L); that stretch reads MQRLVEIERF…FGMNFRMQFY (181 aa). ATP-binding positions include Leu-20, Arg-21, Gly-62, Lys-65, Thr-66, Thr-67, 128–130, Arg-171, Tyr-181, and Arg-218; that span reads EDF. Thr-66 is a binding site for Mg(2+). The small ATPAse domain (RuvB-S) stretch occupies residues 182 to 252; that stretch reads SPEELSKIIS…RAQYALDELG (71 aa). Residues 255-337 are head domain (RuvB-H); it reads SYGFDEMDIK…MPALDDGGLF (83 aa). Arg-309 and Arg-314 together coordinate DNA.

This sequence belongs to the RuvB family. Homohexamer. Forms an RuvA(8)-RuvB(12)-Holliday junction (HJ) complex. HJ DNA is sandwiched between 2 RuvA tetramers; dsDNA enters through RuvA and exits via RuvB. An RuvB hexamer assembles on each DNA strand where it exits the tetramer. Each RuvB hexamer is contacted by two RuvA subunits (via domain III) on 2 adjacent RuvB subunits; this complex drives branch migration. In the full resolvosome a probable DNA-RuvA(4)-RuvB(12)-RuvC(2) complex forms which resolves the HJ.

The protein localises to the cytoplasm. The catalysed reaction is ATP + H2O = ADP + phosphate + H(+). Its function is as follows. The RuvA-RuvB-RuvC complex processes Holliday junction (HJ) DNA during genetic recombination and DNA repair, while the RuvA-RuvB complex plays an important role in the rescue of blocked DNA replication forks via replication fork reversal (RFR). RuvA specifically binds to HJ cruciform DNA, conferring on it an open structure. The RuvB hexamer acts as an ATP-dependent pump, pulling dsDNA into and through the RuvAB complex. RuvB forms 2 homohexamers on either side of HJ DNA bound by 1 or 2 RuvA tetramers; 4 subunits per hexamer contact DNA at a time. Coordinated motions by a converter formed by DNA-disengaged RuvB subunits stimulates ATP hydrolysis and nucleotide exchange. Immobilization of the converter enables RuvB to convert the ATP-contained energy into a lever motion, pulling 2 nucleotides of DNA out of the RuvA tetramer per ATP hydrolyzed, thus driving DNA branch migration. The RuvB motors rotate together with the DNA substrate, which together with the progressing nucleotide cycle form the mechanistic basis for DNA recombination by continuous HJ branch migration. Branch migration allows RuvC to scan DNA until it finds its consensus sequence, where it cleaves and resolves cruciform DNA. This chain is Holliday junction branch migration complex subunit RuvB, found in Sulfurimonas denitrificans (strain ATCC 33889 / DSM 1251) (Thiomicrospira denitrificans (strain ATCC 33889 / DSM 1251)).